A 97-amino-acid chain; its full sequence is Large ribosomal subunit protein uL23 (97 aa).

Belongs to the universal ribosomal protein uL23 family. Part of the 50S ribosomal subunit. Contacts protein L29, and trigger factor when it is bound to the ribosome.

Its function is as follows. One of the early assembly proteins it binds 23S rRNA. One of the proteins that surrounds the polypeptide exit tunnel on the outside of the ribosome. Forms the main docking site for trigger factor binding to the ribosome. The protein is Large ribosomal subunit protein uL23 of Pelagibacter ubique (strain HTCC1062).